Consider the following 299-residue polypeptide: Kynurenine formamidase-like hydrolase fscH (299 aa).

The HGGXW signature appears at histidine 48 to tryptophan 52. The segment at serine 90–alanine 110 is disordered. Serine 142 functions as the Nucleophile in the catalytic mechanism.

The protein belongs to the kynurenine formamidase family.

Its pathway is secondary metabolite biosynthesis. Functionally, kynurenine formamidase-like hydrolase; part of the fragmented gene cluster that mediates the biosynthesis of fusarochromene, a tryptophan-derived metabolite closely related to a group of mycotoxins including fusarochromanone. Within the pathway, fscH converts the product of fscD into 4-hydroxykyrunenine. The first step of the pathway is the epimerization of L-tryptophan to D-tryptophan in the presence of the NRPS-like tryptophan epimerase fscC. D-tryptophan is subsequently hydroxylated by the tryptophan 6-hydroxylase fscE to yield 6-hydroxytryptophan. The pyrrole ring undergoes cleavaged by the tryptophan 2,3-dioxygenase fscD and is finally converted to 4-hydroxykyrunenine by the hydrolase fscH. The NRPS-like oxidoreductase fscA reduces the carboxyl group to primary alcohol and the DMATS-type prenyltransferase fscG performs prenylation, followed by the formation of a chromene ring catalyzed by the oxidoreductase fscI, which leads to desacetylfusarochromene. Epoxidation by fscF and rearrangement reactions of chromene double bonds convert compound desacetylfusarochromene to fusarochromanones. Although specific acetyltransferases were not found near the fsc gene cluster, several predicted enzymes containing the N-acetyltransferase superfamily domain are present in the genome of F.equiseti. These predicted enzymes may have the potential to convert desacetylfusarochromene to fusarochromene. The polypeptide is Kynurenine formamidase-like hydrolase fscH (Fusarium equiseti (Fusarium scirpi)).